The chain runs to 110 residues: Phosphoribosyl-ATP pyrophosphatase (110 aa).

This sequence belongs to the PRA-PH family.

It is found in the cytoplasm. It catalyses the reaction 1-(5-phospho-beta-D-ribosyl)-ATP + H2O = 1-(5-phospho-beta-D-ribosyl)-5'-AMP + diphosphate + H(+). The protein operates within amino-acid biosynthesis; L-histidine biosynthesis; L-histidine from 5-phospho-alpha-D-ribose 1-diphosphate: step 2/9. The chain is Phosphoribosyl-ATP pyrophosphatase from Pseudomonas syringae pv. syringae (strain B728a).